Here is a 115-residue protein sequence, read N- to C-terminus: MWDPLVHEFPETVHGFRCMLANKYLLAVESKYAPDTLGYELIRDCIGVVRSRNYEQATSRYRDIYTRLQGATEAELQQSVQERCCCPHCPRHKKADMGESAHVQKAHDVQAVQKP.

This sequence belongs to the geminiviridae protein AV2/V2 family. In terms of assembly, interacts with host SGS3.

It is found in the host cytoplasm. It localises to the host perinuclear region. Its function is as follows. Through its interaction with host SGS3, acts as a suppressor of RNA-mediated gene silencing, also known as post-transcriptional gene silencing (PTGS), a mechanism of plant viral defense that limits the accumulation of viral RNAs. The sequence is that of Protein V2 from Cynanchum acutum (Little mallow).